The primary structure comprises 127 residues: Small ribosomal subunit protein uS13 (127 aa).

The disordered stretch occupies residues 96–127; the sequence is LPCHGQRTSTNARTRKGPKRTAVKKKGAAKKK. Positions 108–127 are enriched in basic residues; it reads RTRKGPKRTAVKKKGAAKKK.

Belongs to the universal ribosomal protein uS13 family. Part of the 30S ribosomal subunit. Forms a loose heterodimer with protein S19. Forms two bridges to the 50S subunit in the 70S ribosome.

Its function is as follows. Located at the top of the head of the 30S subunit, it contacts several helices of the 16S rRNA. In the 70S ribosome it contacts the 23S rRNA (bridge B1a) and protein L5 of the 50S subunit (bridge B1b), connecting the 2 subunits; these bridges are implicated in subunit movement. Contacts the tRNAs in the A and P-sites. The sequence is that of Small ribosomal subunit protein uS13 from Desulfosudis oleivorans (strain DSM 6200 / JCM 39069 / Hxd3) (Desulfococcus oleovorans).